The following is a 401-amino-acid chain: Multidrug resistance protein MdtH (401 aa).

Transmembrane regions (helical) follow at residues 13-33, 34-54, 78-95, 99-116, 139-159, 165-185, 214-234, 243-263, 289-309, 340-360, and 365-385; these read YFLL…FPLI, SIHF…ALGL, MIVT…FIAL, PWIL…GTLF, LLLM…SWLL, FVCW…ALFL, VLTL…FPII, AAVK…LYPI, FPVG…LFYL, LGLA…YDTG, and IPQL…YALH.

Belongs to the major facilitator superfamily. DHA1 family. MdtH (TC 2.A.1.2.21) subfamily.

Its subcellular location is the cell inner membrane. The chain is Multidrug resistance protein MdtH from Photorhabdus laumondii subsp. laumondii (strain DSM 15139 / CIP 105565 / TT01) (Photorhabdus luminescens subsp. laumondii).